Reading from the N-terminus, the 92-residue chain is Small ribosomal subunit protein uS19 (92 aa).

Belongs to the universal ribosomal protein uS19 family.

In terms of biological role, protein S19 forms a complex with S13 that binds strongly to the 16S ribosomal RNA. In Agrobacterium fabrum (strain C58 / ATCC 33970) (Agrobacterium tumefaciens (strain C58)), this protein is Small ribosomal subunit protein uS19.